Reading from the N-terminus, the 228-residue chain is Extracellular protease inhibitor 10 (228 aa).

A signal peptide spans 1 to 22 (MKSAFTLSLALVAVTATISAAA). Kazal-like domains are found at residues 23 to 72 (DDNC…ECAS), 90 to 127 (TSGT…AKCK), and 156 to 208 (GYQG…EGTL). N-linked (GlcNAc...) asparagine glycosylation occurs at Asn-25. Disulfide bonds link Cys-26-Cys-56, Cys-30-Cys-49, and Cys-38-Cys-70. The tract at residues 69–92 (ECASTPASSATPSPVTSSTGSTSG) is disordered. Low complexity predominate over residues 71–92 (ASTPASSATPSPVTSSTGSTSG). 4 cysteine pairs are disulfide-bonded: Cys-96/Cys-126, Cys-100/Cys-119, Cys-162/Cys-193, and Cys-167/Cys-186. The N-linked (GlcNAc...) asparagine glycan is linked to Asn-199.

In terms of assembly, interacts with host subtilisin-like protease P69B.

The protein resides in the secreted. Its function is as follows. Secreted effector that interacts with and inhibits the pathogenesis-related P69B subtilisin-like serine protease of host tomato. Inhibition of host proteases by a pathogen extracellular protease inhibitor forms a specific type of defense-counterdefense mechanism between plants and microbial pathogens. The protein is Extracellular protease inhibitor 10 of Phytophthora infestans (strain T30-4) (Potato late blight agent).